The primary structure comprises 367 residues: Uracil nucleotide/cysteinyl leukotriene receptor (367 aa).

Positions 1–28 (MSKRSWWAGSRKPPREMLKLSGSDSSQS) are disordered. At 1–64 (MSKRSWWAGS…TPLENMLFAS (64 aa)) the chain is on the extracellular side. N-linked (GlcNAc...) asparagine glycosylation is present at asparagine 42. The chain crosses the membrane as a helical span at residues 65–85 (FYLLDFILALVGNTLALWLFI). The Cytoplasmic segment spans residues 86-92 (RDHKSGT). A helical membrane pass occupies residues 93–113 (PANVFLMHLAVADLSCVLVLP). Topologically, residues 114 to 133 (TRLVYHFSGNHWPFGEIACR) are extracellular. Cysteine 132 and cysteine 209 are oxidised to a cystine. A helical transmembrane segment spans residues 134 to 154 (LTGFLFYLNMYASIYFLTCIS). Over 155-175 (ADRFLAIVHPVKSLKLRRPLY) the chain is Cytoplasmic. Residues 176–196 (AHLACAFLWVVVAVAMAPLLV) form a helical membrane-spanning segment. Topologically, residues 197–223 (SPQTVQTNHTVVCLQLYREKASHHALV) are extracellular. N-linked (GlcNAc...) asparagine glycosylation occurs at asparagine 204. A helical membrane pass occupies residues 224–244 (SLAVAFTFPFITTVTCYLLII). Residues 245 to 260 (RSLRQGLRVEKRLKTK) are Cytoplasmic-facing. The helical transmembrane segment at 261–281 (AVRMIAIVLAIFLVCFVPYHV) threads the bilayer. N-linked (GlcNAc...) asparagine glycosylation occurs at asparagine 282. Residues 282 to 308 (NRSVYVLHYRSHGASCATQRILALANR) lie on the Extracellular side of the membrane. The helical transmembrane segment at 309–329 (ITSCLTSLNGALDPIMYFFVA) threads the bilayer. Topologically, residues 330 to 367 (EKFRHALCNLLCGKRLKGPPPSFEGKTNESSLSAKSEL) are cytoplasmic.

It belongs to the G-protein coupled receptor 1 family. In terms of tissue distribution, expressed in brain, kidney, heart and umbilical vein endothelial cells. Highest level in brain.

It is found in the cell membrane. Its function is as follows. Dual specificity receptor for uracil nucleotides and cysteinyl leukotrienes (CysLTs). Signals through G(i) and inhibition of adenylyl cyclase. May mediate brain damage by nucleotides and CysLTs following ischemia. In Homo sapiens (Human), this protein is Uracil nucleotide/cysteinyl leukotriene receptor (GPR17).